The sequence spans 495 residues: UDP-N-acetylmuramoyl-L-alanyl-D-glutamate--2,6-diaminopimelate ligase (495 aa).

A UDP-N-acetyl-alpha-D-muramoyl-L-alanyl-D-glutamate-binding site is contributed by serine 29. 111–117 is an ATP binding site; the sequence is GTNGKTS. UDP-N-acetyl-alpha-D-muramoyl-L-alanyl-D-glutamate contacts are provided by residues 153 to 154, serine 180, glutamine 186, and arginine 188; that span reads TT. N6-carboxylysine is present on lysine 220. Residues arginine 384, 408–411, glycine 459, and glutamate 463 contribute to the meso-2,6-diaminopimelate site; that span reads DNPR. The short motif at 408-411 is the Meso-diaminopimelate recognition motif element; the sequence is DNPR.

It belongs to the MurCDEF family. MurE subfamily. Mg(2+) serves as cofactor. In terms of processing, carboxylation is probably crucial for Mg(2+) binding and, consequently, for the gamma-phosphate positioning of ATP.

The protein resides in the cytoplasm. The catalysed reaction is UDP-N-acetyl-alpha-D-muramoyl-L-alanyl-D-glutamate + meso-2,6-diaminopimelate + ATP = UDP-N-acetyl-alpha-D-muramoyl-L-alanyl-gamma-D-glutamyl-meso-2,6-diaminopimelate + ADP + phosphate + H(+). The protein operates within cell wall biogenesis; peptidoglycan biosynthesis. Its function is as follows. Catalyzes the addition of meso-diaminopimelic acid to the nucleotide precursor UDP-N-acetylmuramoyl-L-alanyl-D-glutamate (UMAG) in the biosynthesis of bacterial cell-wall peptidoglycan. The chain is UDP-N-acetylmuramoyl-L-alanyl-D-glutamate--2,6-diaminopimelate ligase from Xanthomonas campestris pv. campestris (strain 8004).